Reading from the N-terminus, the 331-residue chain is Phosphate acyltransferase (331 aa).

This sequence belongs to the PlsX family. In terms of assembly, homodimer. Probably interacts with PlsY.

It is found in the cytoplasm. It catalyses the reaction a fatty acyl-[ACP] + phosphate = an acyl phosphate + holo-[ACP]. Its pathway is lipid metabolism; phospholipid metabolism. Its function is as follows. Catalyzes the reversible formation of acyl-phosphate (acyl-PO(4)) from acyl-[acyl-carrier-protein] (acyl-ACP). This enzyme utilizes acyl-ACP as fatty acyl donor, but not acyl-CoA. The chain is Phosphate acyltransferase from Chlorobaculum tepidum (strain ATCC 49652 / DSM 12025 / NBRC 103806 / TLS) (Chlorobium tepidum).